Reading from the N-terminus, the 115-residue chain is Large ribosomal subunit protein bL20c (115 aa).

It belongs to the bacterial ribosomal protein bL20 family.

The protein resides in the plastid. The protein localises to the chloroplast. Its function is as follows. Binds directly to 23S ribosomal RNA and is necessary for the in vitro assembly process of the 50S ribosomal subunit. It is not involved in the protein synthesizing functions of that subunit. The chain is Large ribosomal subunit protein bL20c from Pyropia yezoensis (Susabi-nori).